The chain runs to 360 residues: Phospho-N-acetylmuramoyl-pentapeptide-transferase (360 aa).

A run of 10 helical transmembrane segments spans residues 25-45, 73-93, 97-117, 142-162, 167-187, 199-219, 236-256, 263-283, 288-308, and 338-358; these read RGILSVLTALSLSLWLGPWMI, TMGGALILTAIAISTLLWADL, YVWVVLVVTLLFGAIGWVDDY, IGAAVFLYMTAETPIETTLIV, SVEIQLGIFFVVLTYFVIVGS, GLAIMPTVMVAGALGIFCYLS, AGELIVFCAALVGAGLGFLWF, VFMGDVGALALGAALGTIAVI, IVLFIMGGVFVMETLSVMIQV, and VIVRFWIITVILVLIGLATLK.

Belongs to the glycosyltransferase 4 family. MraY subfamily. It depends on Mg(2+) as a cofactor.

It localises to the cell inner membrane. The enzyme catalyses UDP-N-acetyl-alpha-D-muramoyl-L-alanyl-gamma-D-glutamyl-meso-2,6-diaminopimeloyl-D-alanyl-D-alanine + di-trans,octa-cis-undecaprenyl phosphate = di-trans,octa-cis-undecaprenyl diphospho-N-acetyl-alpha-D-muramoyl-L-alanyl-D-glutamyl-meso-2,6-diaminopimeloyl-D-alanyl-D-alanine + UMP. It participates in cell wall biogenesis; peptidoglycan biosynthesis. Functionally, catalyzes the initial step of the lipid cycle reactions in the biosynthesis of the cell wall peptidoglycan: transfers peptidoglycan precursor phospho-MurNAc-pentapeptide from UDP-MurNAc-pentapeptide onto the lipid carrier undecaprenyl phosphate, yielding undecaprenyl-pyrophosphoryl-MurNAc-pentapeptide, known as lipid I. The polypeptide is Phospho-N-acetylmuramoyl-pentapeptide-transferase (Pseudomonas aeruginosa (strain LESB58)).